An 855-amino-acid chain; its full sequence is DNA mismatch repair protein MutS (855 aa).

621-628 contacts ATP; it reads GPNMGGKS.

The protein belongs to the DNA mismatch repair MutS family.

Its function is as follows. This protein is involved in the repair of mismatches in DNA. It is possible that it carries out the mismatch recognition step. This protein has a weak ATPase activity. The polypeptide is DNA mismatch repair protein MutS (Francisella tularensis subsp. holarctica (strain OSU18)).